Consider the following 170-residue polypeptide: Photosystem I assembly protein Ycf3 (170 aa).

3 TPR repeats span residues 35 to 68, 72 to 105, and 120 to 153; these read AFTH…EIDP, SYIL…NSSL, and GEQA…APSN.

Belongs to the Ycf3 family.

It localises to the plastid. Its subcellular location is the chloroplast thylakoid membrane. Its function is as follows. Essential for the assembly of the photosystem I (PSI) complex. May act as a chaperone-like factor to guide the assembly of the PSI subunits. This chain is Photosystem I assembly protein Ycf3, found in Anthoceros angustus (Hornwort).